The sequence spans 239 residues: Diablo IAP-binding mitochondrial protein (239 aa).

The transit peptide at 1–21 directs the protein to the mitochondrion; sequence MAALKSWLSRSVTSFFRYRQC. An IAP-binding motif is present at residues 56–60; the sequence is AVPIA. The tract at residues 217–239 is disordered; that stretch reads RQKTQEEGEERAESEQEAYLRED.

The protein belongs to the Smac/DIABLO protein family. As to quaternary structure, homodimer. Interacts with BIRC2/c-IAP1 (via BIR3 domain). Interacts with BIRC6/BRUCE; inhibits BIRC6 activity. Interacts with BIRC7/livin. Interacts with XIAP/BIRC4 (via BIR3 domain). Interacts with the monomeric and dimeric form of BIRC5/survivin. Interacts with AREL1 (via HECT domain); in the cytoplasm following induction of apoptosis. Interacts with BEX3. Post-translationally, ubiquitinated by BIRC7/livin. Ubiquitinated by BIRC6. In terms of processing, the precursor form is proteolytically cleaved by mitochondrial processing peptidase MPP to remove the transit peptide and produce an intermediate form. This is then processed by PARL to produce the mature cleaved form which is released from mitochondria into the cytosol in apoptotic cells. In terms of tissue distribution, ubiquitously expressed with highest expression in testis. Expression is also high in heart, liver, kidney, spleen, prostate and ovary. Low in brain, lung, thymus and peripheral blood leukocytes. Isoform 3 is ubiquitously expressed.

It localises to the mitochondrion. Its subcellular location is the cytoplasm. The protein localises to the cytosol. Functionally, promotes apoptosis by activating caspases in the cytochrome c/Apaf-1/caspase-9 pathway. Acts by opposing the inhibitory activity of inhibitor of apoptosis proteins (IAP). Inhibits the activity of BIRC6/BRUCE by inhibiting its binding to caspases. In terms of biological role, attenuates the stability and apoptosis-inhibiting activity of XIAP/BIRC4 by promoting XIAP/BIRC4 ubiquitination and degradation through the ubiquitin-proteasome pathway. Also disrupts XIAP/BIRC4 interacting with processed caspase-9 and promotes caspase-3 activation. Its function is as follows. Defective in the capacity to down-regulate the XIAP/BIRC4 abundance. This Homo sapiens (Human) protein is Diablo IAP-binding mitochondrial protein.